The sequence spans 482 residues: Protein nucleotidyltransferase YdiU (482 aa).

ATP contacts are provided by G88, G90, R91, K111, D123, G124, R174, and R181. D250 acts as the Proton acceptor in catalysis. 2 residues coordinate Mg(2+): N251 and D260. D260 serves as a coordination point for ATP.

It belongs to the SELO family. The cofactor is Mg(2+). Mn(2+) serves as cofactor.

The catalysed reaction is L-seryl-[protein] + ATP = 3-O-(5'-adenylyl)-L-seryl-[protein] + diphosphate. The enzyme catalyses L-threonyl-[protein] + ATP = 3-O-(5'-adenylyl)-L-threonyl-[protein] + diphosphate. It catalyses the reaction L-tyrosyl-[protein] + ATP = O-(5'-adenylyl)-L-tyrosyl-[protein] + diphosphate. It carries out the reaction L-histidyl-[protein] + UTP = N(tele)-(5'-uridylyl)-L-histidyl-[protein] + diphosphate. The catalysed reaction is L-seryl-[protein] + UTP = O-(5'-uridylyl)-L-seryl-[protein] + diphosphate. The enzyme catalyses L-tyrosyl-[protein] + UTP = O-(5'-uridylyl)-L-tyrosyl-[protein] + diphosphate. Nucleotidyltransferase involved in the post-translational modification of proteins. It can catalyze the addition of adenosine monophosphate (AMP) or uridine monophosphate (UMP) to a protein, resulting in modifications known as AMPylation and UMPylation. The chain is Protein nucleotidyltransferase YdiU from Cronobacter sakazakii (strain ATCC BAA-894) (Enterobacter sakazakii).